Consider the following 188-residue polypeptide: Large ribosomal subunit protein uL5 (188 aa).

Belongs to the universal ribosomal protein uL5 family. In terms of assembly, part of the 50S ribosomal subunit; contacts the 5S rRNA and probably tRNA. Forms a bridge to the 30S subunit in the 70S ribosome.

In terms of biological role, this is one of the proteins that bind and probably mediate the attachment of the 5S RNA into the large ribosomal subunit, where it forms part of the central protuberance. In the 70S ribosome it contacts protein S13 of the 30S subunit (bridge B1b), connecting the 2 subunits; this bridge is implicated in subunit movement. May contact the P site tRNA; the 5S rRNA and some of its associated proteins might help stabilize positioning of ribosome-bound tRNAs. This is Large ribosomal subunit protein uL5 from Pyrococcus horikoshii (strain ATCC 700860 / DSM 12428 / JCM 9974 / NBRC 100139 / OT-3).